Here is a 294-residue protein sequence, read N- to C-terminus: Nucleotide-binding protein Cbei_4857 (294 aa).

8-15 provides a ligand contact to ATP; that stretch reads GLSGAGKT. 59 to 62 contacts GTP; sequence DIRG.

This sequence belongs to the RapZ-like family.

Displays ATPase and GTPase activities. The polypeptide is Nucleotide-binding protein Cbei_4857 (Clostridium beijerinckii (strain ATCC 51743 / NCIMB 8052) (Clostridium acetobutylicum)).